The following is a 299-amino-acid chain: 4-hydroxy-tetrahydrodipicolinate synthase (299 aa).

T51 contacts pyruvate. Y139 acts as the Proton donor/acceptor in catalysis. Residue K167 is the Schiff-base intermediate with substrate of the active site. I209 contributes to the pyruvate binding site.

It belongs to the DapA family. In terms of assembly, homotetramer; dimer of dimers.

The protein localises to the cytoplasm. The catalysed reaction is L-aspartate 4-semialdehyde + pyruvate = (2S,4S)-4-hydroxy-2,3,4,5-tetrahydrodipicolinate + H2O + H(+). The protein operates within amino-acid biosynthesis; L-lysine biosynthesis via DAP pathway; (S)-tetrahydrodipicolinate from L-aspartate: step 3/4. In terms of biological role, catalyzes the condensation of (S)-aspartate-beta-semialdehyde [(S)-ASA] and pyruvate to 4-hydroxy-tetrahydrodipicolinate (HTPA). This chain is 4-hydroxy-tetrahydrodipicolinate synthase, found in Methylobacterium radiotolerans (strain ATCC 27329 / DSM 1819 / JCM 2831 / NBRC 15690 / NCIMB 10815 / 0-1).